Reading from the N-terminus, the 86-residue chain is Acyl carrier protein (86 aa).

In terms of domain architecture, Carrier spans 7–85 (SKVDNIEQKV…DVVNYIKEHK (79 aa)). Serine 45 bears the O-(pantetheine 4'-phosphoryl)serine mark.

It belongs to the acyl carrier protein (ACP) family. In terms of processing, 4'-phosphopantetheine is transferred from CoA to a specific serine of apo-ACP by AcpS. This modification is essential for activity because fatty acids are bound in thioester linkage to the sulfhydryl of the prosthetic group.

It localises to the cytoplasm. It functions in the pathway lipid metabolism; fatty acid biosynthesis. In terms of biological role, carrier of the growing fatty acid chain in fatty acid biosynthesis. The protein is Acyl carrier protein of Rickettsia bellii (strain RML369-C).